The sequence spans 274 residues: Phosphatidylglycerol--prolipoprotein diacylglyceryl transferase (274 aa).

4 helical membrane passes run 19–39 (VGSV…VLGL), 59–79 (LAIW…VLFQ), 93–113 (IWRG…AALI), and 120–140 (VSFW…QAIG). Arg-141 serves as a coordination point for a 1,2-diacyl-sn-glycero-3-phospho-(1'-sn-glycerol). The next 3 helical transmembrane spans lie at 181–201 (TFLY…ALFF), 209–229 (GTIF…IEGL), and 243–263 (QVVS…LYLL).

Belongs to the Lgt family.

Its subcellular location is the cell inner membrane. It catalyses the reaction L-cysteinyl-[prolipoprotein] + a 1,2-diacyl-sn-glycero-3-phospho-(1'-sn-glycerol) = an S-1,2-diacyl-sn-glyceryl-L-cysteinyl-[prolipoprotein] + sn-glycerol 1-phosphate + H(+). Its pathway is protein modification; lipoprotein biosynthesis (diacylglyceryl transfer). In terms of biological role, catalyzes the transfer of the diacylglyceryl group from phosphatidylglycerol to the sulfhydryl group of the N-terminal cysteine of a prolipoprotein, the first step in the formation of mature lipoproteins. This is Phosphatidylglycerol--prolipoprotein diacylglyceryl transferase from Acaryochloris marina (strain MBIC 11017).